The following is a 413-amino-acid chain: N-acylneuraminate cytidylyltransferase (413 aa).

It belongs to the CMP-NeuNAc synthase family. Mg(2+) is required as a cofactor. Requires Mn(2+) as cofactor.

It localises to the cytoplasm. It catalyses the reaction an N-acylneuraminate + CTP = a CMP-N-acyl-beta-neuraminate + diphosphate. Functionally, catalyzes the formation of CMP-N-acetylneuraminic acid (CMP-NeuNAc), which is essential for the formation of the capsule. The polypeptide is N-acylneuraminate cytidylyltransferase (neuA) (Streptococcus agalactiae serotype Ia (strain ATCC 27591 / A909 / CDC SS700)).